The chain runs to 176 residues: RING-H2 finger protein ATL73 (176 aa).

A signal peptide spans 1–16 (MARFLLATQATPTISA). A helical transmembrane segment spans residues 42–62 (VIILAALLCALICALGINSVL). The RING-type; atypical zinc-finger motif lies at 113–155 (CLICLGDFVEGETVRVLPKCNHGFHVKCIDTWLLSHSSCPTCR).

The protein belongs to the RING-type zinc finger family. ATL subfamily.

Its subcellular location is the membrane. It carries out the reaction S-ubiquitinyl-[E2 ubiquitin-conjugating enzyme]-L-cysteine + [acceptor protein]-L-lysine = [E2 ubiquitin-conjugating enzyme]-L-cysteine + N(6)-ubiquitinyl-[acceptor protein]-L-lysine.. It functions in the pathway protein modification; protein ubiquitination. The sequence is that of RING-H2 finger protein ATL73 (ATL73) from Arabidopsis thaliana (Mouse-ear cress).